The primary structure comprises 209 residues: Uracil phosphoribosyltransferase (209 aa).

Residues R79, R104, and 131–139 contribute to the 5-phospho-alpha-D-ribose 1-diphosphate site; that span reads DPMLATGGS. Residues I194 and 199 to 201 contribute to the uracil site; that span reads GDA. D200 contacts 5-phospho-alpha-D-ribose 1-diphosphate.

The protein belongs to the UPRTase family. Mg(2+) is required as a cofactor.

It carries out the reaction UMP + diphosphate = 5-phospho-alpha-D-ribose 1-diphosphate + uracil. The protein operates within pyrimidine metabolism; UMP biosynthesis via salvage pathway; UMP from uracil: step 1/1. Allosterically activated by GTP. Functionally, catalyzes the conversion of uracil and 5-phospho-alpha-D-ribose 1-diphosphate (PRPP) to UMP and diphosphate. This chain is Uracil phosphoribosyltransferase, found in Lacticaseibacillus paracasei (strain ATCC 334 / BCRC 17002 / CCUG 31169 / CIP 107868 / KCTC 3260 / NRRL B-441) (Lactobacillus paracasei).